A 126-amino-acid polypeptide reads, in one-letter code: Histone H2B type 2-E (126 aa).

A compositionally biased stretch (low complexity) spans 1–12 (MPEPAKSAPAPK). The disordered stretch occupies residues 1–35 (MPEPAKSAPAPKKGSKKAVTKAQKKDGKKRKRSRK). Pro-2 bears the N-acetylproline mark. The residue at position 3 (Glu-3) is an ADP-ribosyl glutamic acid. Lys-6 carries the N6-(2-hydroxyisobutyryl)lysine; alternate modification. N6-(beta-hydroxybutyryl)lysine; alternate is present on Lys-6. Lys-6 is modified (N6-acetyllysine; alternate). Residue Lys-6 is modified to N6-butyryllysine; alternate. Lys-6 is modified (N6-crotonyllysine; alternate). Lys-6 bears the N6-lactoyllysine; alternate mark. Lys-6 participates in a covalent cross-link: Glycyl lysine isopeptide (Lys-Gly) (interchain with G-Cter in SUMO2); alternate. Ser-7 bears the ADP-ribosylserine mark. Residue Lys-12 is modified to N6-(beta-hydroxybutyryl)lysine; alternate. Residues Lys-12 and Lys-13 each carry the N6-acetyllysine; alternate modification. An N6-crotonyllysine; alternate mark is found at Lys-12 and Lys-13. At Lys-12 the chain carries N6-lactoyllysine; alternate. N6-(2-hydroxyisobutyryl)lysine; alternate is present on Lys-13. At Ser-15 the chain carries Phosphoserine; by STK4/MST1. N6-acetyllysine; alternate occurs at positions 16, 17, 21, and 24. An N6-crotonyllysine; alternate mark is found at Lys-16, Lys-17, Lys-21, and Lys-24. Lys-16, Lys-17, Lys-21, and Lys-24 each carry N6-lactoyllysine; alternate. N6-(beta-hydroxybutyryl)lysine; alternate is present on residues Lys-17 and Lys-21. The residue at position 17 (Lys-17) is an N6-glutaryllysine; alternate. An N6-(2-hydroxyisobutyryl)lysine; alternate mark is found at Lys-21 and Lys-24. Lys-21 is subject to N6-butyryllysine; alternate. Lys-21 participates in a covalent cross-link: Glycyl lysine isopeptide (Lys-Gly) (interchain with G-Cter in SUMO2); alternate. N6-(2-hydroxyisobutyryl)lysine is present on Lys-25. Lys-35 is subject to N6-(2-hydroxyisobutyryl)lysine; alternate. At Lys-35 the chain carries N6-(beta-hydroxybutyryl)lysine; alternate. Lys-35 carries the N6-crotonyllysine; alternate modification. Lys-35 is subject to N6-glutaryllysine; alternate. Lys-35 bears the N6-succinyllysine; alternate mark. A Glycyl lysine isopeptide (Lys-Gly) (interchain with G-Cter in ubiquitin); alternate cross-link involves residue Lys-35. Glu-36 carries the polyADP-ribosyl glutamic acid modification. At Ser-37 the chain carries Phosphoserine; by AMPK. N6-(2-hydroxyisobutyryl)lysine; alternate is present on residues Lys-44, Lys-47, and Lys-58. Lys-44 is modified (N6-lactoyllysine; alternate). Lys-44 and Lys-47 each carry N6-glutaryllysine; alternate. Lys-47 carries the post-translational modification N6-methyllysine; alternate. Residue Lys-58 is modified to N6,N6-dimethyllysine; alternate. A Dimethylated arginine modification is found at Arg-80. Position 86 is an N6-(2-hydroxyisobutyryl)lysine; alternate (Lys-86). At Lys-86 the chain carries N6-(beta-hydroxybutyryl)lysine; alternate. An N6-acetyllysine; alternate modification is found at Lys-86. Residue Lys-86 is modified to N6-lactoyllysine; alternate. Lys-86 carries the N6,N6,N6-trimethyllysine; alternate modification. Omega-N-methylarginine is present on residues Arg-87 and Arg-93. Lys-109 carries the N6-(2-hydroxyisobutyryl)lysine; alternate modification. N6-lactoyllysine; alternate is present on Lys-109. Lys-109 bears the N6-glutaryllysine; alternate mark. Position 109 is an N6-methyllysine; alternate (Lys-109). Residue Ser-113 is glycosylated (O-linked (GlcNAc) serine). The residue at position 116 (Thr-116) is a Phosphothreonine. Residues Lys-117 and Lys-121 each carry the N6-(2-hydroxyisobutyryl)lysine; alternate modification. An N6-(beta-hydroxybutyryl)lysine; alternate mark is found at Lys-117 and Lys-121. Lys-117 and Lys-121 each carry N6-lactoyllysine; alternate. Lys-117 and Lys-121 each carry N6-glutaryllysine; alternate. An N6-succinyllysine; alternate mark is found at Lys-117 and Lys-121. N6-malonyllysine; alternate is present on Lys-117. Position 117 is an N6-methylated lysine; alternate (Lys-117). Lys-121 participates in a covalent cross-link: Glycyl lysine isopeptide (Lys-Gly) (interchain with G-Cter in ubiquitin); alternate.

The protein belongs to the histone H2B family. As to quaternary structure, the nucleosome is a histone octamer containing two molecules each of H2A, H2B, H3 and H4 assembled in one H3-H4 heterotetramer and two H2A-H2B heterodimers. The octamer wraps approximately 147 bp of DNA. Monoubiquitination at Lys-35 (H2BK34Ub) by the MSL1/MSL2 dimer is required for histone H3 'Lys-4' (H3K4me) and 'Lys-79' (H3K79me) methylation and transcription activation at specific gene loci, such as HOXA9 and MEIS1 loci. Similarly, monoubiquitination at Lys-121 (H2BK120Ub) by the RNF20/40 complex gives a specific tag for epigenetic transcriptional activation and is also prerequisite for histone H3 'Lys-4' and 'Lys-79' methylation. It also functions cooperatively with the FACT dimer to stimulate elongation by RNA polymerase II. H2BK120Ub also acts as a regulator of mRNA splicing: deubiquitination by USP49 is required for efficient cotranscriptional splicing of a large set of exons. In terms of processing, phosphorylation at Ser-37 (H2BS36ph) by AMPK in response to stress promotes transcription. Phosphorylated on Ser-15 (H2BS14ph) by STK4/MST1 during apoptosis; which facilitates apoptotic chromatin condensation. Also phosphorylated on Ser-15 in response to DNA double strand breaks (DSBs), and in correlation with somatic hypermutation and immunoglobulin class-switch recombination. Post-translationally, glcNAcylation at Ser-113 promotes monoubiquitination of Lys-121. It fluctuates in response to extracellular glucose, and associates with transcribed genes. ADP-ribosylated by PARP1 or PARP2 on Ser-7 (H2BS6ADPr) in response to DNA damage. H2BS6ADPr promotes recruitment of CHD1L. Mono-ADP-ribosylated on Glu-3 (H2BE2ADPr) by PARP3 in response to single-strand breaks. Poly ADP-ribosylation on Glu-36 (H2BE35ADPr) by PARP1 regulates adipogenesis: it inhibits phosphorylation at Ser-37 (H2BS36ph), thereby blocking expression of pro-adipogenetic genes. In terms of processing, crotonylation (Kcr) is specifically present in male germ cells and marks testis-specific genes in post-meiotic cells, including X-linked genes that escape sex chromosome inactivation in haploid cells. Crotonylation marks active promoters and enhancers and confers resistance to transcriptional repressors. It is also associated with post-meiotically activated genes on autosomes. Post-translationally, lactylated in macrophages by EP300/P300 by using lactoyl-CoA directly derived from endogenous or exogenous lactate, leading to stimulates gene transcription.

It is found in the nucleus. Its subcellular location is the chromosome. Its function is as follows. Core component of nucleosome. Nucleosomes wrap and compact DNA into chromatin, limiting DNA accessibility to the cellular machineries which require DNA as a template. Histones thereby play a central role in transcription regulation, DNA repair, DNA replication and chromosomal stability. DNA accessibility is regulated via a complex set of post-translational modifications of histones, also called histone code, and nucleosome remodeling. Functionally, has broad antibacterial activity. May contribute to the formation of the functional antimicrobial barrier of the colonic epithelium, and to the bactericidal activity of amniotic fluid. In Homo sapiens (Human), this protein is Histone H2B type 2-E.